The sequence spans 132 residues: Histone H2A.1 (132 aa).

At serine 2 the chain carries N-acetylserine. N6-acetyllysine occurs at positions 5 and 8. N6-succinyllysine occurs at positions 14 and 22. Position 106 is an N5-methylglutamine (glutamine 106). An N6-malonyllysine; alternate modification is found at lysine 120. Residue lysine 127 forms a Glycyl lysine isopeptide (Lys-Gly) (interchain with G-Cter in SUMO) linkage. A Phosphoserine modification is found at serine 129. A [ST]-Q motif motif is present at residues 129–130 (SQ).

The protein belongs to the histone H2A family. As to quaternary structure, the nucleosome is a histone octamer containing two molecules each of H2A, H2B, H3 and H4 assembled in one H3-H4 heterotetramer and two H2A-H2B heterodimers. The octamer wraps approximately 147 bp of DNA. Post-translationally, phosphorylated to form H2AS128ph (gamma-H2A) in response to DNA double-strand breaks (DSBs) generated by exogenous genotoxic agents and by stalled replication forks. Phosphorylation is dependent on the DNA damage checkpoint kinases MEC1/ATR and TEL1/ATM, spreads on either side of a detected DSB site and may mark the surrounding chromatin for recruitment of proteins required for DNA damage signaling and repair. Gamma-H2A interacts with ARP4, a shared component of the NuA4 histone acetyltransferase complex and the INO80 and SWR1 chromatin remodeling complexes, and serves to recruit first NuA4, mediating histone H4 acetylation, and subsequently the INO80/SWR1 complexes, facilitating DNA resection, to DSB sites. Gamma-H2A is required for sequestering cohesin around the break site, which is important for efficient post-replicative double-strand break repair by homologous recombination, holding the damaged chromatid close to its undamaged sister template. Gamma-H2A is removed from the DNA prior to the strand invasion-primer extension step of the repair process and subsequently dephosphorylated by PPH3, a component of the histone H2A phosphatase complex (HTP-C). Dephosphorylation is necessary for efficient recovery from the DNA damage checkpoint. In terms of processing, N-acetylated by NAT4. Acetylated by ESA1, a component of the NuA4 histone acetyltransferase (HAT) complex, to form H2AK4ac and H2AK7ac. Post-translationally, glutamine methylation at Gln-106 (H2AQ105me) by NOP1 is specifically dedicated to polymerase I. It is present at 35S ribosomal DNA locus and impairs binding of the FACT complex. In terms of processing, sumoylated to from H2AK126su. May lead to transcriptional repression.

It is found in the nucleus. The protein resides in the chromosome. In terms of biological role, core component of nucleosome which plays a central role in DNA double strand break (DSB) repair. Nucleosomes wrap and compact DNA into chromatin, limiting DNA accessibility to the cellular machineries which require DNA as a template. Histones thereby play a central role in transcription regulation, DNA repair, DNA replication and chromosomal stability. DNA accessibility is regulated via a complex set of post-translational modifications of histones, also called histone code, and nucleosome remodeling. This chain is Histone H2A.1 (HTA1), found in Saccharomyces cerevisiae (strain ATCC 204508 / S288c) (Baker's yeast).